Consider the following 269-residue polypeptide: Zinc finger protein SNAI2 (269 aa).

The tract at residues 1 to 20 is SNAG domain; the sequence is MPRSFLVKKHFNASKKPNYS. Residues 81–117 form a disordered region; the sequence is SSSLGRVSPPPSSDTSSKDHSGSESPISDEEERLQPK. 4 C2H2-type zinc fingers span residues 129–151, 160–182, 186–208, and 214–236; these read FQCN…KQLH, FSCK…IRTH, CVCK…IRTH, and FSCP…LQTH. The C2H2-type 5; atypical zinc finger occupies 242–265; sequence YQCKNCSKTFSRMSLLHKHEESGC.

Belongs to the snail C2H2-type zinc-finger protein family. In terms of assembly, interacts (via SNAG domain) with LIMD1 (via LIM domains), WTIP (via LIM domains) and AJUBA (via LIM domains). Interacts (via zinc fingers) with KPNA2, KPNB1, and TNPO1. May interact (via zinc fingers) with IPO7. In terms of processing, phosphorylated by GSK3B. Once phosphorylated, it becomes a target for ubiquitination. Post-translationally, ubiquitinated by the SCF(FBXO11) complex; ubiquitination requires previous GSK3B-mediated SNAI2 phosphorylation.

The protein resides in the nucleus. It is found in the cytoplasm. Transcriptional repressor that modulates both activator-dependent and basal transcription. Involved in the generation and migration of neural crest cells. Plays a role in mediating RAF1-induced transcriptional repression of the TJ protein, occludin (OCLN) and subsequent oncogenic transformation of epithelial cells. Represses BRCA2 expression by binding to its E2-box-containing silencer and recruiting CTBP1 and HDAC1 in breast cells. In epidermal keratinocytes, binds to the E-box in ITGA3 promoter and represses its transcription. Involved in the regulation of ITGB1 and ITGB4 expression and cell adhesion and proliferation in epidermal keratinocytes. Binds to E-box2 domain of BSG and activates its expression during TGFB1-induced epithelial-mesenchymal transition (EMT) in hepatocytes. Represses E-Cadherin/CDH1 transcription via E-box elements. Involved in osteoblast maturation. Binds to RUNX2 and SOC9 promoters and may act as a positive and negative transcription regulator, respectively, in osteoblasts. Binds to CXCL12 promoter via E-box regions in mesenchymal stem cells and osteoblasts. Plays an essential role in TWIST1-induced EMT and its ability to promote invasion and metastasis. The protein is Zinc finger protein SNAI2 (Snai2) of Mus musculus (Mouse).